We begin with the raw amino-acid sequence, 493 residues long: MRNTMNLTNLLAPWLDCPELADITVQSLELDSRQVKQGDTFVAIVGHVVDGRQYIEKAIEQGANAVIAQSCQQYPPGLVRYQQNVVIVYLEKLDEKLSQLAGRLYQHPEMSLIGVTGTNGKTTITQLIAQWLELAGQKAAVMGTTGNGFLNALQPAANTTGNAVEIQKTLADLQQQGAKATALEVSSHGLVQGRVKALQFAAGVFTNLSRDHLDYHGTMEAYAKAKMTLFTEHQCQHAIINLDDEVGAQWFQELQQGVGVSLFPQDASVKALWASSVAYAESGITIEFDGCFGQGRLHAPLIGEFNATNLLLALATLLALGVDKQALLDSAASLRPVLGRMELFQVNSKAKVVVDYAHTPDALEKALQALRVHCTGHLWAIFGCGGDRDKGKRPMMAEIAERLADHVVLTDDNPRSEDPAMIVQDMLAGLTRGDSAVVEHDRFSALQYALDNAQADDIILLAGKGHEDYQVLKHQTVHYSDRESAQQLLGISS.

The UDP-N-acetyl-alpha-D-muramoyl-L-alanyl-D-glutamate site is built by L30 and S32. 117 to 123 (GTNGKTT) lines the ATP pocket. Residues N158, 159–160 (TT), S186, Q192, and R194 contribute to the UDP-N-acetyl-alpha-D-muramoyl-L-alanyl-D-glutamate site. K226 carries the N6-carboxylysine modification. Residues R388, 412–415 (DNPR), G463, and E467 each bind meso-2,6-diaminopimelate. A Meso-diaminopimelate recognition motif motif is present at residues 412 to 415 (DNPR).

This sequence belongs to the MurCDEF family. MurE subfamily. Requires Mg(2+) as cofactor. Post-translationally, carboxylation is probably crucial for Mg(2+) binding and, consequently, for the gamma-phosphate positioning of ATP.

Its subcellular location is the cytoplasm. It catalyses the reaction UDP-N-acetyl-alpha-D-muramoyl-L-alanyl-D-glutamate + meso-2,6-diaminopimelate + ATP = UDP-N-acetyl-alpha-D-muramoyl-L-alanyl-gamma-D-glutamyl-meso-2,6-diaminopimelate + ADP + phosphate + H(+). It participates in cell wall biogenesis; peptidoglycan biosynthesis. Catalyzes the addition of meso-diaminopimelic acid to the nucleotide precursor UDP-N-acetylmuramoyl-L-alanyl-D-glutamate (UMAG) in the biosynthesis of bacterial cell-wall peptidoglycan. The sequence is that of UDP-N-acetylmuramoyl-L-alanyl-D-glutamate--2,6-diaminopimelate ligase from Vibrio vulnificus (strain YJ016).